A 132-amino-acid chain; its full sequence is ATP synthase epsilon chain (132 aa).

It belongs to the ATPase epsilon chain family. In terms of assembly, F-type ATPases have 2 components, CF(1) - the catalytic core - and CF(0) - the membrane proton channel. CF(1) has five subunits: alpha(3), beta(3), gamma(1), delta(1), epsilon(1). CF(0) has three main subunits: a, b and c.

The protein resides in the cell inner membrane. Produces ATP from ADP in the presence of a proton gradient across the membrane. In Anaeromyxobacter sp. (strain K), this protein is ATP synthase epsilon chain.